We begin with the raw amino-acid sequence, 360 residues long: Ubiquitin carboxyl-terminal hydrolase MIY1 (360 aa).

Catalysis depends on Cys28, which acts as the Nucleophile. His216 functions as the Proton acceptor in the catalytic mechanism. A disordered region spans residues 317 to 360 (KRKIHSHKKNSEIHAPVKKDKFKRRSSLLNAKASEKEKSECVVM). Basic and acidic residues-rich tracts occupy residues 325–335 (KNSEIHAPVKK) and 349–360 (ASEKEKSECVVM).

It belongs to the MINDY deubiquitinase family. FAM63 subfamily.

The protein resides in the cytoplasm. It catalyses the reaction Thiol-dependent hydrolysis of ester, thioester, amide, peptide and isopeptide bonds formed by the C-terminal Gly of ubiquitin (a 76-residue protein attached to proteins as an intracellular targeting signal).. Its function is as follows. Hydrolase that can specifically remove 'Lys-48'-linked conjugated ubiquitin from proteins. Has endodeubiquitinase activity. This chain is Ubiquitin carboxyl-terminal hydrolase MIY1, found in Saccharomyces cerevisiae (strain ATCC 204508 / S288c) (Baker's yeast).